The sequence spans 63 residues: Large ribosomal subunit protein bL32 (63 aa).

The span at 1 to 18 shows a compositional bias: basic residues; that stretch reads MAHPKAKVSKSRRDKRRA. The interval 1–25 is disordered; sequence MAHPKAKVSKSRRDKRRAQFNARTK.

The protein belongs to the bacterial ribosomal protein bL32 family.

This is Large ribosomal subunit protein bL32 from Chlorobium phaeovibrioides (strain DSM 265 / 1930) (Prosthecochloris vibrioformis (strain DSM 265)).